A 194-amino-acid polypeptide reads, in one-letter code: Segregation and condensation protein B (194 aa).

It belongs to the ScpB family. As to quaternary structure, homodimer. Homodimerization may be required to stabilize the binding of ScpA to the Smc head domains. Component of a cohesin-like complex composed of ScpA, ScpB and the Smc homodimer, in which ScpA and ScpB bind to the head domain of Smc. The presence of the three proteins is required for the association of the complex with DNA.

It localises to the cytoplasm. Participates in chromosomal partition during cell division. May act via the formation of a condensin-like complex containing Smc and ScpA that pull DNA away from mid-cell into both cell halves. This Streptococcus agalactiae serotype Ia (strain ATCC 27591 / A909 / CDC SS700) protein is Segregation and condensation protein B.